A 261-amino-acid polypeptide reads, in one-letter code: Succinate dehydrogenase iron-sulfur subunit (261 aa).

The disordered stretch occupies residues 1–23 (MAELRLPPNSVVKKGKEHKEQEE). Residues 28-119 (RKVKIYRYDP…DIKIYPLPHM (92 aa)) form the 2Fe-2S ferredoxin-type domain. [2Fe-2S] cluster-binding residues include cysteine 80, cysteine 85, and cysteine 100. Residues 161–191 (GREKLDGLYECILCACCSTSCPSYWWNGDKY) enclose the 4Fe-4S ferredoxin-type domain. [4Fe-4S] cluster is bound by residues cysteine 171, cysteine 174, and cysteine 177. Cysteine 181 provides a ligand contact to [3Fe-4S] cluster. Position 186 (tryptophan 186) interacts with a ubiquinone. 2 residues coordinate [3Fe-4S] cluster: cysteine 228 and cysteine 234. Cysteine 238 is a binding site for [4Fe-4S] cluster.

It belongs to the succinate dehydrogenase/fumarate reductase iron-sulfur protein family. Part of an enzyme complex containing four subunits: a flavoprotein, an iron-sulfur, cytochrome b-556, and a hydrophobic anchor protein. [2Fe-2S] cluster serves as cofactor. [3Fe-4S] cluster is required as a cofactor. The cofactor is [4Fe-4S] cluster.

It carries out the reaction a quinone + succinate = fumarate + a quinol. It functions in the pathway carbohydrate metabolism; tricarboxylic acid cycle; fumarate from succinate (bacterial route): step 1/1. This Rickettsia felis (strain ATCC VR-1525 / URRWXCal2) (Rickettsia azadi) protein is Succinate dehydrogenase iron-sulfur subunit (sdhB).